Reading from the N-terminus, the 104-residue chain is Large ribosomal subunit protein bL21 (104 aa).

It belongs to the bacterial ribosomal protein bL21 family. As to quaternary structure, part of the 50S ribosomal subunit. Contacts protein L20.

In terms of biological role, this protein binds to 23S rRNA in the presence of protein L20. The polypeptide is Large ribosomal subunit protein bL21 (Francisella tularensis subsp. tularensis (strain FSC 198)).